The primary structure comprises 854 residues: Envelope glycoprotein gp150 (854 aa).

The Extracellular portion of the chain corresponds to 1 to 783 (MAEGFAANRQ…WIGNIPQYLK (783 aa)). N-linked (GlcNAc...) asparagine; by host glycosylation is found at N218, N256, N267, N272, N296, N328, N334, N340, N416, N420, N479, N497, N529, N546, and N549. The fusion peptide stretch occupies residues 614–634 (VMLALATVLSMAGAGTGATAI). A coiled-coil region spans residues 641–691 (QQVLATHQEAIEKVTEALKINNLRLVTLEHQVLVIGLKVEAMEKFLYTAFA). The tract at residues 660–678 (INNLRLVTLEHQVLVIGLK) is immunosuppression. N715, N719, N727, and N735 each carry an N-linked (GlcNAc...) asparagine; by host glycan. Residues 734–770 (YNQTKDLQQRFYEIIMDIEQNNVQGKKGLQQLQEWED) adopt a coiled-coil conformation. Residues 784–804 (GLLGGILGIGLGMLLLILCLP) traverse the membrane as a helical segment. The Cytoplasmic portion of the chain corresponds to 805-854 (TLVDCIRNCIHKILGYTVIAMPEVEEEEIQPQMELRRNGRQCGMSEKEEE).

As to quaternary structure, the mature envelope protein (Env) consists of a trimer of SU-TM heterodimers attached by noncovalent interactions or by a labile interchain disulfide bond. In terms of processing, specific enzymatic cleavages in vivo yield mature proteins. Envelope glycoproteins are synthesized as an inactive precursor that is N-glycosylated and processed likely by host cell furin or by a furin-like protease in the Golgi to yield the mature SU and TM proteins. The cleavage site between SU and TM requires the minimal sequence [KR]-X-[KR]-R.

It is found in the virion membrane. It localises to the host cell membrane. In terms of biological role, the surface protein (SU) attaches the virus to the host cell by binding to its receptor. This interaction triggers the refolding of the transmembrane protein (TM) and is thought to activate its fusogenic potential by unmasking its fusion peptide. Fusion occurs at the host cell plasma membrane. Its function is as follows. The transmembrane protein (TM) acts as a class I viral fusion protein. Under the current model, the protein has at least 3 conformational states: pre-fusion native state, pre-hairpin intermediate state, and post-fusion hairpin state. During viral and target cell membrane fusion, the coiled coil regions (heptad repeats) assume a trimer-of-hairpins structure, positioning the fusion peptide in close proximity to the C-terminal region of the ectodomain. The formation of this structure appears to drive apposition and subsequent fusion of viral and target cell membranes. Membranes fusion leads to delivery of the nucleocapsid into the cytoplasm. This chain is Envelope glycoprotein gp150 (env), found in Feline immunodeficiency virus (isolate Wo) (FIV).